A 656-amino-acid polypeptide reads, in one-letter code: Leucine aminopeptidase 2 (656 aa).

Substrate is bound by residues glutamine 173–glutamate 175 and proline 302–glutamate 307. A Zn(2+)-binding site is contributed by histidine 331. Glutamate 332 serves as the catalytic Proton acceptor. Histidine 335 and glutamate 354 together coordinate Zn(2+). The Proton donor role is filled by tyrosine 420.

This sequence belongs to the peptidase M1 family. Zn(2+) serves as cofactor.

It is found in the cytoplasm. The protein resides in the nucleus. It carries out the reaction an epoxide + H2O = an ethanediol. In terms of biological role, aminopeptidase that preferentially cleaves di- and tripeptides. Also has low epoxide hydrolase activity (in vitro). Can hydrolyze the epoxide leukotriene LTA(4) but it forms preferentially 5,6-dihydroxy-7,9,11,14-eicosatetraenoic acid rather than the cytokine leukotriene B(4) as the product compared to the homologous mammalian enzyme (in vitro). The chain is Leucine aminopeptidase 2 from Vanderwaltozyma polyspora (strain ATCC 22028 / DSM 70294 / BCRC 21397 / CBS 2163 / NBRC 10782 / NRRL Y-8283 / UCD 57-17) (Kluyveromyces polysporus).